The following is a 221-amino-acid chain: CDP-diacylglycerol--glycerol-3-phosphate 3-phosphatidyltransferase (221 aa).

The next 5 membrane-spanning stretches (helical) occupy residues 8–28 (ILTV…LYFH), 34–54 (WFAL…GYLA), 75–95 (MVVI…WLIL), 133–153 (AQMV…LEGI), and 187–207 (ATWL…ITGW).

The protein belongs to the CDP-alcohol phosphatidyltransferase class-I family.

The protein resides in the cell membrane. The catalysed reaction is a CDP-1,2-diacyl-sn-glycerol + sn-glycerol 3-phosphate = a 1,2-diacyl-sn-glycero-3-phospho-(1'-sn-glycero-3'-phosphate) + CMP + H(+). Its pathway is phospholipid metabolism; phosphatidylglycerol biosynthesis; phosphatidylglycerol from CDP-diacylglycerol: step 1/2. This protein catalyzes the committed step to the synthesis of the acidic phospholipids. In Cereibacter sphaeroides (strain ATCC 17023 / DSM 158 / JCM 6121 / CCUG 31486 / LMG 2827 / NBRC 12203 / NCIMB 8253 / ATH 2.4.1.) (Rhodobacter sphaeroides), this protein is CDP-diacylglycerol--glycerol-3-phosphate 3-phosphatidyltransferase (pgsA).